The following is a 699-amino-acid chain: Tectonic-like complex member Mks1 (699 aa).

Disordered regions lie at residues 101-121 (RRSP…EGEI) and 373-396 (DGFS…IEED). A compositionally biased stretch (basic and acidic residues) spans 108-119 (HEGEMEKDKNEG). Positions 434–560 (KRVSLLLELQ…RLQCIRPLGN (127 aa)) constitute a C2 B9-type domain. Positions 632–661 (LELGNDSSDDGDSNDDDVRSSSNPDTSRAT) are disordered.

In terms of assembly, probable component of the tectonic-like complex (also named MKS complex), composed of B9d1, B9d2, Cc2d2a, Mks1 and tctn. As to expression, expressed in chordotonal neurons in the antennae (at protein level). Expressed in spermatids (at protein level).

It is found in the cytoplasm. The protein resides in the cytoskeleton. Its subcellular location is the cilium basal body. It localises to the microtubule organizing center. The protein localises to the centrosome. It is found in the centriole. Probable component of the tectonic-like complex (also named MKS complex), a complex localized at the transition zone of primary cilia. Required for ciliary structure and function. This is Tectonic-like complex member Mks1 from Drosophila melanogaster (Fruit fly).